Reading from the N-terminus, the 169-residue chain is Methanogen homoaconitase small subunit (169 aa).

Residues 27 to 30 (YLRT) carry the YLRT motif.

It belongs to the LeuD family. LeuD type 2 subfamily. As to quaternary structure, heterotetramer of 2 HacA and 2 HacB proteins.

The catalysed reaction is (2R)-homocitrate = (2R,3S)-homoisocitrate. The enzyme catalyses (2R)-homocitrate = cis-homoaconitate + H2O. It carries out the reaction (2R,3S)-homoisocitrate = cis-homoaconitate + H2O. It catalyses the reaction cis-(homo)2aconitate + H2O = (2R,3S)-iso(homo)2citrate. The catalysed reaction is cis-(homo)3aconitate + H2O = (2R,3S)-iso(homo)3citrate. The protein operates within organic acid metabolism; 2-oxosuberate biosynthesis. Functionally, component of a hydro-lyase with broad substrate specificity for cis-unsaturated tricarboxylic acids. Catalyzes both the reversible dehydration of (R)-homocitrate ((R)-2-hydroxybutane-1,2,4-tricarboxylate) to produce cis-homoaconitate ((Z)-but-1-ene-1,2,4-tricarboxylate), and its hydration to homoisocitrate ((1R,2S)-1-hydroxybutane-1,2,4-tricarboxylate). Is also able to hydrate the analogous longer chain substrates cis-homo(2)-aconitate, cis-homo(3)-aconitate. These reactions are part of the biosynthesis pathway of coenzyme B. The protein is Methanogen homoaconitase small subunit (hacB) of Methanosarcina mazei (strain ATCC BAA-159 / DSM 3647 / Goe1 / Go1 / JCM 11833 / OCM 88) (Methanosarcina frisia).